Here is a 90-residue protein sequence, read N- to C-terminus: U7-theraphotoxin-Hhn1a 4 (90 aa).

The N-terminal stretch at Met1–Ser19 is a signal peptide. A propeptide spanning residues Phe20 to Glu50 is cleaved from the precursor. Intrachain disulfides connect Cys51/Cys65, Cys58/Cys70, and Cys64/Cys81.

The protein belongs to the neurotoxin 10 (Hwtx-1) family. 13 (Hntx-13) subfamily. As to expression, expressed by the venom gland.

The protein localises to the secreted. Ion channel inhibitor. The polypeptide is U7-theraphotoxin-Hhn1a 4 (Cyriopagopus hainanus (Chinese bird spider)).